Here is an 87-residue protein sequence, read N- to C-terminus: Small ribosomal subunit protein bS16 (87 aa).

The protein belongs to the bacterial ribosomal protein bS16 family.

This is Small ribosomal subunit protein bS16 from Desulfatibacillum aliphaticivorans.